The chain runs to 140 residues: uncharacterized protein (140 aa).

This is an uncharacterized protein from Escherichia coli O157:H7.